We begin with the raw amino-acid sequence, 108 residues long: UPF0145 protein MADE_1007770 (108 aa).

It belongs to the UPF0145 family.

The protein is UPF0145 protein MADE_1007770 of Alteromonas mediterranea (strain DSM 17117 / CIP 110805 / LMG 28347 / Deep ecotype).